The primary structure comprises 1394 residues: DNA-directed RNA polymerase subunit beta' (1394 aa).

The Zn(2+) site is built by Cys70, Cys72, Cys85, and Cys88. Residues Asp470, Asp472, and Asp474 each coordinate Mg(2+). Residues Cys815, Cys889, Cys896, and Cys899 each coordinate Zn(2+).

The protein belongs to the RNA polymerase beta' chain family. As to quaternary structure, the RNAP catalytic core consists of 2 alpha, 1 beta, 1 beta' and 1 omega subunit. When a sigma factor is associated with the core the holoenzyme is formed, which can initiate transcription. It depends on Mg(2+) as a cofactor. Zn(2+) is required as a cofactor.

It carries out the reaction RNA(n) + a ribonucleoside 5'-triphosphate = RNA(n+1) + diphosphate. Its function is as follows. DNA-dependent RNA polymerase catalyzes the transcription of DNA into RNA using the four ribonucleoside triphosphates as substrates. The chain is DNA-directed RNA polymerase subunit beta' from Anaeromyxobacter dehalogenans (strain 2CP-C).